A 127-amino-acid polypeptide reads, in one-letter code: Small ribosomal subunit protein uS11 (127 aa).

Belongs to the universal ribosomal protein uS11 family. In terms of assembly, part of the 30S ribosomal subunit.

Functionally, located on the platform of the 30S subunit. The polypeptide is Small ribosomal subunit protein uS11 (Natronomonas pharaonis (strain ATCC 35678 / DSM 2160 / CIP 103997 / JCM 8858 / NBRC 14720 / NCIMB 2260 / Gabara) (Halobacterium pharaonis)).